Reading from the N-terminus, the 447-residue chain is Argininosuccinate synthase (447 aa).

ATP is bound by residues 17-25 (AFSGGLDTS) and A43. Residue Y99 coordinates L-citrulline. G129 and T131 together coordinate ATP. Residues T131, N135, and D136 each coordinate L-aspartate. N135 provides a ligand contact to L-citrulline. Residue D136 participates in ATP binding. L-citrulline-binding residues include R139 and S192. Position 194 (D194) interacts with ATP. L-citrulline-binding residues include T201, E203, and E280.

The protein belongs to the argininosuccinate synthase family. Type 2 subfamily. In terms of assembly, homotetramer.

It localises to the cytoplasm. It carries out the reaction L-citrulline + L-aspartate + ATP = 2-(N(omega)-L-arginino)succinate + AMP + diphosphate + H(+). The protein operates within amino-acid biosynthesis; L-arginine biosynthesis; L-arginine from L-ornithine and carbamoyl phosphate: step 2/3. The polypeptide is Argininosuccinate synthase (Citrobacter koseri (strain ATCC BAA-895 / CDC 4225-83 / SGSC4696)).